Here is a 212-residue protein sequence, read N- to C-terminus: Orotate phosphoribosyltransferase (212 aa).

Lys26 serves as a coordination point for 5-phospho-alpha-D-ribose 1-diphosphate. Residue 34-35 (FF) participates in orotate binding. Residues 72-73 (YK), Arg99, Lys100, Lys103, His105, and 124-132 (DDVITVGTA) contribute to the 5-phospho-alpha-D-ribose 1-diphosphate site. Residues Thr128 and Arg156 each coordinate orotate.

Belongs to the purine/pyrimidine phosphoribosyltransferase family. PyrE subfamily. In terms of assembly, homodimer. Requires Mg(2+) as cofactor.

It carries out the reaction orotidine 5'-phosphate + diphosphate = orotate + 5-phospho-alpha-D-ribose 1-diphosphate. Its pathway is pyrimidine metabolism; UMP biosynthesis via de novo pathway; UMP from orotate: step 1/2. Catalyzes the transfer of a ribosyl phosphate group from 5-phosphoribose 1-diphosphate to orotate, leading to the formation of orotidine monophosphate (OMP). The polypeptide is Orotate phosphoribosyltransferase (Ruthia magnifica subsp. Calyptogena magnifica).